Here is a 165-residue protein sequence, read N- to C-terminus: Putative tyrosine-protein phosphatase AMV078 (165 aa).

One can recognise a Tyrosine-protein phosphatase domain in the interval 2-149 (NISNINNDIY…LKFYNSYKNI (148 aa)). The active-site Phosphocysteine intermediate is C94.

Belongs to the protein-tyrosine phosphatase family. Non-receptor class dual specificity subfamily.

The catalysed reaction is O-phospho-L-tyrosyl-[protein] + H2O = L-tyrosyl-[protein] + phosphate. This is Putative tyrosine-protein phosphatase AMV078 from Amsacta moorei entomopoxvirus (AmEPV).